A 63-amino-acid chain; its full sequence is Large ribosomal subunit protein bL35 (63 aa).

The protein belongs to the bacterial ribosomal protein bL35 family.

The sequence is that of Large ribosomal subunit protein bL35 from Campylobacter jejuni (strain RM1221).